The primary structure comprises 170 residues: Protein SprT (170 aa).

The SprT-like domain occupies 22-165 (LQLANQHLGT…RQCGEKLQFI (144 aa)). His-78 serves as a coordination point for Zn(2+). Glu-79 is a catalytic residue. His-82 contributes to the Zn(2+) binding site.

Belongs to the SprT family. Zn(2+) is required as a cofactor.

Its subcellular location is the cytoplasm. This is Protein SprT from Yersinia pseudotuberculosis serotype IB (strain PB1/+).